The sequence spans 145 residues: Large ribosomal subunit protein uL15 (145 aa).

The segment at 1 to 57 (MKLNDLSPAPGSRREKHRPGRGIGSGLGKTGGRGHKGQTSRSGGTIAPGFEGGQQPL) is disordered. Gly residues predominate over residues 21 to 31 (RGIGSGLGKTG).

Belongs to the universal ribosomal protein uL15 family. As to quaternary structure, part of the 50S ribosomal subunit.

Binds to the 23S rRNA. This Pseudomonas fluorescens (strain Pf0-1) protein is Large ribosomal subunit protein uL15.